A 219-amino-acid chain; its full sequence is Ribosomal RNA small subunit methyltransferase Nep1 (219 aa).

S-adenosyl-L-methionine-binding positions include Gly178, Gly183, and 196–201 (LYKAPL).

It belongs to the class IV-like SAM-binding methyltransferase superfamily. RNA methyltransferase NEP1 family. As to quaternary structure, homodimer.

It carries out the reaction a pseudouridine in rRNA + S-adenosyl-L-methionine = an N(1)-methylpseudouridine in rRNA + S-adenosyl-L-homocysteine + H(+). Functionally, methyltransferase involved in ribosomal biogenesis. Specifically catalyzes the N1-methylation of the pseudouridine corresponding to position 914 in M.jannaschii 16S rRNA. In Thermococcus onnurineus (strain NA1), this protein is Ribosomal RNA small subunit methyltransferase Nep1.